The primary structure comprises 121 residues: Replication protein A 14 kDa subunit (121 aa).

Residues lysine 39 and lysine 88 each participate in a glycyl lysine isopeptide (Lys-Gly) (interchain with G-Cter in ubiquitin) cross-link.

It belongs to the replication factor A protein 3 family. Component of the canonical replication protein A complex (RPA), a heterotrimer composed of RPA1, RPA2 and RPA3. Also a component of the aRPA, the alternative replication protein A complex, a trimeric complex similar to the replication protein A complex/RPA but where RPA1 and RPA3 are associated with RPA4 instead of RPA2. In terms of processing, ubiquitinated by RFWD3 at stalled replication forks in response to DNA damage: ubiquitination by RFWD3 does not lead to degradation by the proteasome and promotes removal of the RPA complex from stalled replication forks, promoting homologous recombination.

It is found in the nucleus. Functionally, as part of the heterotrimeric replication protein A complex (RPA/RP-A), binds and stabilizes single-stranded DNA intermediates, that form during DNA replication or upon DNA stress. It prevents their reannealing and in parallel, recruits and activates different proteins and complexes involved in DNA metabolism. Thereby, it plays an essential role both in DNA replication and the cellular response to DNA damage. In the cellular response to DNA damage, the RPA complex controls DNA repair and DNA damage checkpoint activation. Through recruitment of ATRIP activates the ATR kinase a master regulator of the DNA damage response. It is required for the recruitment of the DNA double-strand break repair factors RAD51 and RAD52 to chromatin, in response to DNA damage. Also recruits to sites of DNA damage proteins like XPA and XPG that are involved in nucleotide excision repair and is required for this mechanism of DNA repair. Also plays a role in base excision repair (BER), probably through interaction with UNG. Also recruits SMARCAL1/HARP, which is involved in replication fork restart, to sites of DNA damage. May also play a role in telomere maintenance. RPA3 has its own single-stranded DNA-binding activity and may be responsible for polarity of the binding of the complex to DNA. This is Replication protein A 14 kDa subunit (Rpa3) from Mus musculus (Mouse).